Reading from the N-terminus, the 313-residue chain is 4-hydroxy-3-methylbut-2-enyl diphosphate reductase (313 aa).

C20 is a binding site for [4Fe-4S] cluster. (2E)-4-hydroxy-3-methylbut-2-enyl diphosphate is bound by residues H49 and H82. H49 and H82 together coordinate dimethylallyl diphosphate. H49 and H82 together coordinate isopentenyl diphosphate. [4Fe-4S] cluster is bound at residue C104. H132 is a (2E)-4-hydroxy-3-methylbut-2-enyl diphosphate binding site. Residue H132 coordinates dimethylallyl diphosphate. H132 is an isopentenyl diphosphate binding site. The Proton donor role is filled by E134. T172 serves as a coordination point for (2E)-4-hydroxy-3-methylbut-2-enyl diphosphate. Residue C201 participates in [4Fe-4S] cluster binding. Positions 229, 230, 231, and 273 each coordinate (2E)-4-hydroxy-3-methylbut-2-enyl diphosphate. Residues S229, S230, N231, and S273 each coordinate dimethylallyl diphosphate. Isopentenyl diphosphate-binding residues include S229, S230, N231, and S273.

The protein belongs to the IspH family. It depends on [4Fe-4S] cluster as a cofactor.

It catalyses the reaction isopentenyl diphosphate + 2 oxidized [2Fe-2S]-[ferredoxin] + H2O = (2E)-4-hydroxy-3-methylbut-2-enyl diphosphate + 2 reduced [2Fe-2S]-[ferredoxin] + 2 H(+). The enzyme catalyses dimethylallyl diphosphate + 2 oxidized [2Fe-2S]-[ferredoxin] + H2O = (2E)-4-hydroxy-3-methylbut-2-enyl diphosphate + 2 reduced [2Fe-2S]-[ferredoxin] + 2 H(+). The protein operates within isoprenoid biosynthesis; dimethylallyl diphosphate biosynthesis; dimethylallyl diphosphate from (2E)-4-hydroxy-3-methylbutenyl diphosphate: step 1/1. It functions in the pathway isoprenoid biosynthesis; isopentenyl diphosphate biosynthesis via DXP pathway; isopentenyl diphosphate from 1-deoxy-D-xylulose 5-phosphate: step 6/6. In terms of biological role, catalyzes the conversion of 1-hydroxy-2-methyl-2-(E)-butenyl 4-diphosphate (HMBPP) into a mixture of isopentenyl diphosphate (IPP) and dimethylallyl diphosphate (DMAPP). Acts in the terminal step of the DOXP/MEP pathway for isoprenoid precursor biosynthesis. The protein is 4-hydroxy-3-methylbut-2-enyl diphosphate reductase of Desulfotalea psychrophila (strain LSv54 / DSM 12343).